An 820-amino-acid chain; its full sequence is Probable ATP-dependent RNA helicase DDX23 (820 aa).

The span at 1-42 shows a compositional bias: basic and acidic residues; sequence MAGELADKKDRDASPSKEERKRSRTPDRERDRDRDRKSSPSK. The interval 1-244 is disordered; the sequence is MAGELADKKD…QKIREEKDKS (244 aa). S14 and S16 each carry phosphoserine. The span at 43–65 shows a compositional bias: basic residues; it reads DRKRHRSRDRRRGGSRSRSRSRS. The segment covering 66 to 105 has biased composition (basic and acidic residues); it reads KSAERERRHKERERDKERDRNKKDRDRDKDGHRRDKDRKR. Phosphoserine occurs at positions 107 and 109. Basic and acidic residues-rich tracts occupy residues 112–137, 147–226, and 233–244; these read RGKD…DKKP, LLAK…RETN, and GRQKIREEKDKS. Residues 391 to 419 carry the Q motif motif; the sequence is RSWKDSSLPPHILEVIDKCGYKEPTPIQR. The 206-residue stretch at 422 to 627 folds into the Helicase ATP-binding domain; that stretch reads IPIGLQNRDI…RSYLRRPAVV (206 aa). 435 to 442 provides a ligand contact to ATP; sequence AETGSGKT. Residues 549 to 552 carry the DEAD box motif; the sequence is DEAD. In terms of domain architecture, Helicase C-terminal spans 651–799; the sequence is KRKKLLAILE…SCPPELANHP (149 aa). Glycyl lysine isopeptide (Lys-Gly) (interchain with G-Cter in SUMO2) cross-links involve residues K686 and K811.

This sequence belongs to the DEAD box helicase family. DDX23/PRP28 subfamily. The phosphorylated form (by SRPK2) is a component of the U4/U6-U5 tri-snRNP complex composed of the U4, U6 and U5 snRNAs and at least PRPF3, PRPF4, PRPF6, PRPF8, PRPF31, SNRNP200, TXNL4A, WDR57, SNRNP40, DDX23, CD2BP2, PPIH, SNU13, EFTUD2, SART1 and USP39. Identified in the spliceosome C complex. Interacts with ERBB4. Interacts with ERCC6. In vitro phosphorylated by CLK1 and U1 snRNP-associated protein kinase. Phosphorylated by SRPK2 and this phosphorylation is required for its association with the tri-snRNP (U4/U6-U5 tri-small nuclear ribonucleoproteins) and subsequent spliceosomal B complex formation. May be phosphorylated by SRPK2 on Ser residues in the SR domain; the phosphorylation is required for the removal of inappropriate R-loops during transcription.

It localises to the nucleus. It is found in the chromosome. It catalyses the reaction ATP + H2O = ADP + phosphate + H(+). In terms of biological role, involved in pre-mRNA splicing and its phosphorylated form (by SRPK2) is required for spliceosomal B complex formation. Independently of its spliceosome formation function, required for the suppression of incorrect R-loops formed during transcription; R-loops are composed of a DNA:RNA hybrid and the associated non-template single-stranded DNA. This Pongo abelii (Sumatran orangutan) protein is Probable ATP-dependent RNA helicase DDX23.